A 345-amino-acid chain; its full sequence is MPRIDADLKLDFKDVLLRPKRSSLKSRSEVDLERTFTFRNSKQTYSGIPIIVANMDTVGTFEMAVVMSQHAMFTAVHKHYSLDDWKCFAETHPECLQHVAVSSGSGQNDLERMSRILEAVPQVKFICLDVANGYSEHFVEFVKLVRSKFPEHTIMAGNVVTGEMVEELILSGADIIKVGVGPGSVCTTRTKTGVGYPQLSAVIECADSAHGLKGHIISDGGCTCPGDVAKAFGAGADFVMLGGMFSGHTECAGEVIERNGQKLKLFYGMSSDTAMKKHAGGVAEYRASEGKTVEVPYKGDVENTILDILGGLRSTCTYVGAAKLKELSRRATFIRVTQQHNTVFG.

An NADP(+)-binding site is contributed by 26 to 27; the sequence is SR. Phosphoserine is present on serine 28. NADP(+) contacts are provided by residues lysine 78, 129 to 131, and 180 to 181; these read DVA and VG. Residues glycine 181, glycine 183, and cysteine 186 each coordinate K(+). Cysteine 186 functions as the Thioimidate intermediate in the catalytic mechanism. The Proton donor/acceptor role is filled by threonine 188. Residue arginine 189 coordinates K(+). GMP is bound by residues 219–221, 242–243, 268–270, and 286–290; these read DGG, GG, GMS, and RASEG. Residues methionine 269, 285–286, and 314–317 contribute to the NADP(+) site; these read YR and STCT.

The protein belongs to the IMPDH/GMPR family. GuaC type 1 subfamily. Homotetramer.

The catalysed reaction is IMP + NH4(+) + NADP(+) = GMP + NADPH + 2 H(+). Catalyzes the irreversible NADPH-dependent deamination of GMP to IMP. It functions in the conversion of nucleobase, nucleoside and nucleotide derivatives of G to A nucleotides, and in maintaining the intracellular balance of A and G nucleotides. The chain is GMP reductase 1 (Gmpr) from Mus musculus (Mouse).